A 276-amino-acid chain; its full sequence is Large ribosomal subunit protein uL2 (276 aa).

Residues 225 to 276 (MNPVDHPHGGGEGRAPVGRKHPVTPWGKPAMGAKTRKKRKLSDKLIVKPRNK) are disordered. A compositionally biased stretch (basic residues) spans 258 to 276 (KTRKKRKLSDKLIVKPRNK).

This sequence belongs to the universal ribosomal protein uL2 family. Part of the 50S ribosomal subunit. Forms a bridge to the 30S subunit in the 70S ribosome.

One of the primary rRNA binding proteins. Required for association of the 30S and 50S subunits to form the 70S ribosome, for tRNA binding and peptide bond formation. It has been suggested to have peptidyltransferase activity; this is somewhat controversial. Makes several contacts with the 16S rRNA in the 70S ribosome. The protein is Large ribosomal subunit protein uL2 of Moorella thermoacetica (strain ATCC 39073 / JCM 9320).